A 4144-amino-acid polypeptide reads, in one-letter code: DNA-dependent protein kinase catalytic subunit (4144 aa).

Lys-127 carries the N6-acetyllysine modification. The stretch at Asp-298–Val-333 is one HEAT 1 repeat. Ser-521, Ser-851, and Ser-903 each carry phosphoserine. Residues Gln-1014–Ser-1050 form an HEAT 2 repeat. Ser-1075 carries the phosphoserine modification. At Lys-1219 the chain carries N6-acetyllysine. An interaction with C1D region spans residues Leu-1516–Leu-1551. Positions Leu-1516–Leu-1551 are leucine-zipper. A TPR 1 repeat occupies Pro-1736–Pro-1769. Lys-1983 is modified (N6-acetyllysine). Ser-2069 is subject to Phosphoserine; by autocatalysis. Lys-2271 bears the N6-acetyllysine mark. The KIP-binding stretch occupies residues Leu-2448–Arg-3228. At Thr-2547 the chain carries Phosphothreonine. At Thr-2621 the chain carries Phosphothreonine; by autocatalysis. Position 2624 is a phosphoserine; by autocatalysis (Ser-2624). Residues Thr-2650 and Thr-2659 each carry the phosphothreonine; by autocatalysis modification. The tract at residues Ala-2697–Asp-2729 is disordered. The segment covering Phe-2716–Asp-2729 has biased composition (basic and acidic residues). Residues Glu-2753–His-2781 are may split the end of the DNA molecule, with the two strands separating around the region. Position 2805 is a phosphoserine (Ser-2805). TPR repeat units follow at residues Pro-2903–Asp-2935, Val-2936–Gly-2964, and Thr-2965–Val-2998. Residues Pro-2922 to Ser-3555 enclose the FAT domain. At Ser-3221 the chain carries Phosphoserine. An N6-acetyllysine mark is found at Lys-3257, Lys-3276, Lys-3654, and Lys-3658. Residues Leu-3711 to Ile-3748 form a TPR 5 repeat. Positions Phe-3738–Gly-4069 constitute a PI3K/PI4K catalytic domain. Residues Val-3744–Lys-3750 form a G-loop region. Phosphoserine is present on residues Ser-3747 and Ser-3837. Residues Gly-3935–Asn-3943 form a catalytic loop region. Positions Gly-3955–Thr-3980 are activation loop. Ser-4042 carries the post-translational modification Phosphoserine. One can recognise an FATC domain in the interval Asn-4112–Met-4144.

This sequence belongs to the PI3/PI4-kinase family. In terms of assembly, DNA-PK is a heterotrimer of PRKDC and the Ku dimer (composed of XRCC6/Ku70 and XRCC5/Ku86). Formation of this complex may be promoted by interaction with ILF3. Component of the core long-range non-homologous end joining (NHEJ) complex (also named DNA-PK complex) composed of PRKDC, LIG4, XRCC4, XRCC6/Ku70, XRCC5/Ku86 and NHEJ1/XLF. Additional component of the NHEJ complex includes PAXX. Following autophosphorylation, PRKDC dissociates from DNA. Interacts with DNA-PKcs-interacting protein (KIP) with the region upstream the kinase domain. PRKDC alone also interacts with and phosphorylates DCLRE1C, thereby activating the latent endonuclease activity of this protein. Interacts with C1D. Interacts with TTI1 and TELO2. Interacts with CIB1. Interacts with SETX. Interacts with NR4A3; the DNA-dependent protein kinase complex DNA-PK phosphorylates and activates NR4A3 and prevents NR4A3 ubiquitination and degradation. Interacts with BRAT1. Part of the HDP-RNP complex composed of at least HEXIM1, PRKDC, XRCC5, XRCC6, paraspeckle proteins (SFPQ, NONO, PSPC1, RBM14, and MATR3) and NEAT1 RNA. Interacts with KAT5. Autophosphorylated at two clusters, the T2609 cluster and the S2056 cluster. Autophosphorylated on Ser-2069, Thr-2621, Thr-2650 and Thr-2659. Ser-2069 and Thr-2621 are DNA damage-inducible phosphorylation sites (inducible with ionizing radiation, IR) dephosphorylated by PPP5C. Autophosphorylation induces a conformational change that leads to remodeling of the DNA-PK complex, requisite for efficient end processing and DNA repair. Autophosphorylation in trans within DNA-PK complexes loaded on DNA ends leads to the dissociation of PRKDC from DNA and the transition into the short-range NHEJ complex. Autophosphorylation of the T2609 cluster is required for hematopoietic development and protein synthesis in erythrocytes precursors. Post-translationally, S-nitrosylated by GAPDH. In terms of processing, polyubiquitinated by RNF144A, leading to proteasomal degradation.

The protein localises to the nucleus. It localises to the nucleolus. Its subcellular location is the cytoplasm. The protein resides in the cytosol. It catalyses the reaction L-seryl-[protein] + ATP = O-phospho-L-seryl-[protein] + ADP + H(+). The enzyme catalyses L-threonyl-[protein] + ATP = O-phospho-L-threonyl-[protein] + ADP + H(+). Activity seems to be attenuated by autophosphorylation. Binding to the SL1 region of U3 small nucleolar RNA promotes auto-phosphorylation activity. Inhibited by wortmannin. Its function is as follows. Serine/threonine-protein kinase that acts as a molecular sensor for DNA damage. Involved in DNA non-homologous end joining (NHEJ) required for double-strand break (DSB) repair and V(D)J recombination. Must be bound to DNA to express its catalytic properties. Promotes processing of hairpin DNA structures in V(D)J recombination by activation of the hairpin endonuclease artemis (DCLRE1C). Recruited by XRCC5 and XRCC6 to DNA ends and is required to (1) protect and align broken ends of DNA, thereby preventing their degradation, (2) and sequester the DSB for repair by NHEJ. Acts as a scaffold protein to aid the localization of DNA repair proteins to the site of damage. The assembly of the DNA-PK complex at DNA ends is also required for the NHEJ ligation step. Found at the ends of chromosomes, suggesting a further role in the maintenance of telomeric stability and the prevention of chromosomal end fusion. Also involved in modulation of transcription. As part of the DNA-PK complex, involved in the early steps of ribosome assembly by promoting the processing of precursor rRNA into mature 18S rRNA in the small-subunit processome. Binding to U3 small nucleolar RNA, recruits PRKDC and XRCC5/Ku86 to the small-subunit processome. Recognizes the substrate consensus sequence [ST]-Q. Phosphorylates 'Ser-139' of histone variant H2AX, thereby regulating DNA damage response mechanism. Phosphorylates ASF1A, DCLRE1C, c-Abl/ABL1, histone H1, HSPCA, c-jun/JUN, p53/TP53, PARP1, POU2F1, DHX9, FH, SRF, NHEJ1/XLF, XRCC1, XRCC4, XRCC5, XRCC6, WRN, MYC and RFA2. Can phosphorylate C1D not only in the presence of linear DNA but also in the presence of supercoiled DNA. Ability to phosphorylate p53/TP53 in the presence of supercoiled DNA is dependent on C1D. Acts as a regulator of the phosphatidylinositol 3-kinase/protein kinase B signal transduction by mediating phosphorylation of 'Ser-473' of protein kinase B (PKB/AKT1, PKB/AKT2, PKB/AKT3), promoting their activation. Contributes to the determination of the circadian period length by antagonizing phosphorylation of CRY1 'Ser-588' and increasing CRY1 protein stability, most likely through an indirect mechanism. Plays a role in the regulation of DNA virus-mediated innate immune response by assembling into the HDP-RNP complex, a complex that serves as a platform for IRF3 phosphorylation and subsequent innate immune response activation through the cGAS-STING pathway. Also regulates the cGAS-STING pathway by catalyzing phosphorylation of CGAS, thereby impairing CGAS oligomerization and activation. Also regulates the cGAS-STING pathway by mediating phosphorylation of PARP1. The protein is DNA-dependent protein kinase catalytic subunit (PRKDC) of Canis lupus familiaris (Dog).